The chain runs to 730 residues: Synaptotagmin-like protein 5 (730 aa).

A RabBD domain is found at 7–123 (FINLSFLLDH…IITGEWFFEE (117 aa)). The segment at 64–106 (CVHCHRNLGLIFDRGDPCQACSLRVCRECRVAGPNGSWKCTVC) adopts an FYVE-type zinc-finger fold. Phosphoserine is present on S147. Disordered stretches follow at residues 147 to 188 (SPGA…GFLL), 217 to 271 (QHFR…TRTV), and 294 to 355 (SQEL…LDKD). 2 stretches are compositionally biased toward polar residues: residues 248-271 (PKSS…TRTV) and 305-322 (TSGT…SSDQ). C2 domains are found at residues 406-527 (VSGE…DEWF) and 563-694 (PPEQ…VDWM).

In terms of assembly, binds RAB27A that has been activated by GTP-binding, and possibly also RAB3A and RAB6A. In terms of tissue distribution, highly expressed in placenta and liver.

The protein resides in the membrane. In terms of biological role, may act as Rab effector protein and play a role in vesicle trafficking. Binds phospholipids. The sequence is that of Synaptotagmin-like protein 5 (SYTL5) from Homo sapiens (Human).